We begin with the raw amino-acid sequence, 178 residues long: Large ribosomal subunit protein uL6 (178 aa).

The protein belongs to the universal ribosomal protein uL6 family. In terms of assembly, part of the 50S ribosomal subunit.

In terms of biological role, this protein binds to the 23S rRNA, and is important in its secondary structure. It is located near the subunit interface in the base of the L7/L12 stalk, and near the tRNA binding site of the peptidyltransferase center. In Bacillus licheniformis (strain ATCC 14580 / DSM 13 / JCM 2505 / CCUG 7422 / NBRC 12200 / NCIMB 9375 / NCTC 10341 / NRRL NRS-1264 / Gibson 46), this protein is Large ribosomal subunit protein uL6.